The primary structure comprises 3394 residues: Protein PFC0760c (3394 aa).

Composition is skewed to low complexity over residues 471-508 (NNND…NYNN), 515-528 (NMNS…NNLH), and 786-841 (NNQN…NQNN). Disordered stretches follow at residues 471 to 539 (NNND…DENN), 779 to 844 (MSSN…NAGI), 1038 to 1099 (NKKK…NNDD), 1892 to 1918 (TTTT…NNND), 2648 to 2693 (KMDL…DNHL), 2835 to 2909 (AKNE…NSNN), 3000 to 3057 (VSVG…DVNT), and 3107 to 3394 (DYVN…NSEE). Residues 1038–1097 (NKKKNNDGDNKSQEDDDGNKKKNNDGDNKSQEDDDGNKKKNNDGDNKSQEDDYGNKKKNN) are compositionally biased toward basic and acidic residues. The span at 2657-2671 (GDDDDDDDDDDDDDN) shows a compositional bias: acidic residues. A compositionally biased stretch (low complexity) spans 2672-2686 (NNNNNNNNNNNNNNM). A compositionally biased stretch (polar residues) spans 2836-2846 (KNENYPVSTHY). 2 stretches are compositionally biased toward low complexity: residues 2855 to 2865 (DNINNDNNNDN) and 2872 to 2909 (NDNI…NSNN). Acidic residues-rich tracts occupy residues 3007 to 3047 (DNND…EEKE) and 3147 to 3257 (DDDE…DDND). Residues 3258 to 3292 (NDHNDDNNDEEKYSCHDDKNEHTNNDLLNIDHDNN) are compositionally biased toward basic and acidic residues. Over residues 3300-3309 (LYSTYNVSVS) the composition is skewed to polar residues. Residues 3310–3320 (HNKDPSNKENE) are compositionally biased toward basic and acidic residues. Over residues 3321–3330 (IQNLISIDSS) the composition is skewed to polar residues. The span at 3331 to 3379 (NENDENDENDENDENDENDENDENDENDENDENDEKDENDENDENDENF) shows a compositional bias: acidic residues. A compositionally biased stretch (polar residues) spans 3385 to 3394 (GTLNEMNSEE).

This Plasmodium falciparum (isolate 3D7) protein is Protein PFC0760c.